Here is a 200-residue protein sequence, read N- to C-terminus: Glycerol-3-phosphate acyltransferase (200 aa).

Transmembrane regions (helical) follow at residues 3–23 (YIYS…FFIA), 50–70 (FYGA…VFLV), 75–95 (IKFM…SIFL), 109–129 (VFLA…LFIV), and 134–154 (YVSL…FFAG).

It belongs to the PlsY family. Probably interacts with PlsX.

The protein resides in the cell inner membrane. The enzyme catalyses an acyl phosphate + sn-glycerol 3-phosphate = a 1-acyl-sn-glycero-3-phosphate + phosphate. It participates in lipid metabolism; phospholipid metabolism. Its function is as follows. Catalyzes the transfer of an acyl group from acyl-phosphate (acyl-PO(4)) to glycerol-3-phosphate (G3P) to form lysophosphatidic acid (LPA). This enzyme utilizes acyl-phosphate as fatty acyl donor, but not acyl-CoA or acyl-ACP. In Thermosipho melanesiensis (strain DSM 12029 / CIP 104789 / BI429), this protein is Glycerol-3-phosphate acyltransferase.